Here is a 62-residue protein sequence, read N- to C-terminus: Large ribosomal subunit protein bL28 (62 aa).

The protein belongs to the bacterial ribosomal protein bL28 family.

In Caldicellulosiruptor bescii (strain ATCC BAA-1888 / DSM 6725 / KCTC 15123 / Z-1320) (Anaerocellum thermophilum), this protein is Large ribosomal subunit protein bL28.